The following is a 125-amino-acid chain: Large ribosomal subunit protein bL19 (125 aa).

The protein belongs to the bacterial ribosomal protein bL19 family.

Functionally, this protein is located at the 30S-50S ribosomal subunit interface and may play a role in the structure and function of the aminoacyl-tRNA binding site. The chain is Large ribosomal subunit protein bL19 from Ehrlichia ruminantium (strain Welgevonden).